A 321-amino-acid chain; its full sequence is tRNA dimethylallyltransferase (321 aa).

An ATP-binding site is contributed by G25–S32. T27–S32 serves as a coordination point for substrate. Residues D50 to Q53 are interaction with substrate tRNA.

Belongs to the IPP transferase family. In terms of assembly, monomer. Mg(2+) is required as a cofactor.

The enzyme catalyses adenosine(37) in tRNA + dimethylallyl diphosphate = N(6)-dimethylallyladenosine(37) in tRNA + diphosphate. Functionally, catalyzes the transfer of a dimethylallyl group onto the adenine at position 37 in tRNAs that read codons beginning with uridine, leading to the formation of N6-(dimethylallyl)adenosine (i(6)A). This Rhodopseudomonas palustris (strain ATCC BAA-98 / CGA009) protein is tRNA dimethylallyltransferase.